Consider the following 522-residue polypeptide: GMP synthase [glutamine-hydrolyzing] (522 aa).

In terms of domain architecture, Glutamine amidotransferase type-1 spans 9 to 204 (KILILDFGAQ…VVDICGCQTL (196 aa)). C86 serves as the catalytic Nucleophile. Residues H178 and E180 contribute to the active site. One can recognise a GMPS ATP-PPase domain in the interval 205–397 (WTSANIIEDQ…LGLPHAMVYR (193 aa)). 232–238 (SGGVDSS) provides a ligand contact to ATP.

As to quaternary structure, homodimer.

The catalysed reaction is XMP + L-glutamine + ATP + H2O = GMP + L-glutamate + AMP + diphosphate + 2 H(+). Its pathway is purine metabolism; GMP biosynthesis; GMP from XMP (L-Gln route): step 1/1. Its function is as follows. Catalyzes the synthesis of GMP from XMP. This is GMP synthase [glutamine-hydrolyzing] from Xylella fastidiosa (strain M23).